The following is a 225-amino-acid chain: Putative membrane protease YugP (225 aa).

His-95 lines the Zn(2+) pocket. The active site involves Glu-96. Residues His-99 and His-103 each contribute to the Zn(2+) site. The next 3 membrane-spanning stretches (helical) occupy residues 116–138, 140–162, and 192–212; these read IFPV…MLLG, LNLI…ITLP, and VLSA…FELL.

It is found in the cell membrane. This is Putative membrane protease YugP (yugP) from Bacillus subtilis (strain 168).